The primary structure comprises 723 residues: LIM domain-binding protein 3 (723 aa).

Positions 1 to 84 (MSYSVTLTGP…NLSLTLQKSK (84 aa)) constitute a PDZ domain. Phosphoserine is present on residues Ser44, Ser98, and Asp112. 2 disordered regions span residues 89–134 (ISTT…GALE) and 164–193 (SPVA…RQYN). Thr119 carries the phosphothreonine modification. A phosphoserine mark is found at Ser121 and Ser123. Residue Ser214 is modified to Phosphoserine. Arg216 is subject to Omega-N-methylarginine. Phosphoserine occurs at positions 220, 251, and 288. Disordered regions lie at residues 280–423 (GTEY…YSPT) and 436–525 (SPAP…PQVT). Ala291 carries the omega-N-methylarginine modification. A compositionally biased stretch (low complexity) spans 309 to 376 (ATSPLLPASA…AAAASPAPSA (68 aa)). At Ile327 the chain carries Phosphoserine. Ser330 bears the Omega-N-methylarginine mark. Over residues 436-466 (SPAPTYTPSPAPTYSPSPAPAYTPSPAPNYT) the composition is skewed to pro residues. Polar residues predominate over residues 490–509 (DSFSQKFAPGKSTTTVSKQT). Omega-N-methylarginine is present on residues Arg512 and Arg529. 3 consecutive LIM zinc-binding domains span residues 545–603 (PLCG…QFFA), 604–663 (PICA…LFST), and 664–723 (KCHG…AINV).

In terms of assembly, interacts via its LIM domains with various PKC isoforms. Interacts via its PDZ domain with the ACTN2 C-terminal region. Interacts with MYOZ1, MYOZ2 and MYOZ3. In terms of tissue distribution, expressed primarily in adult heart and skeletal muscle, and detected at lower levels in lung. Isoforms are expressed in a tissue-specific manner. Isoform 1, isoform 3 and isoform 5 are expressed in heart, whereas isoform 2, isoform 4 and isoform 6 are expressed in skeletal muscle.

It localises to the cytoplasm. The protein resides in the perinuclear region. The protein localises to the cell projection. Its subcellular location is the pseudopodium. It is found in the cytoskeleton. It localises to the myofibril. The protein resides in the sarcomere. The protein localises to the z line. In terms of biological role, may function as an adapter in striated muscle to couple protein kinase C-mediated signaling via its LIM domains to the cytoskeleton. In Mus musculus (Mouse), this protein is LIM domain-binding protein 3.